We begin with the raw amino-acid sequence, 736 residues long: 1,4-alpha-glucan branching enzyme GlgB (736 aa).

The active-site Nucleophile is D415. Catalysis depends on E470, which acts as the Proton donor.

This sequence belongs to the glycosyl hydrolase 13 family. GlgB subfamily. Monomer.

The enzyme catalyses Transfers a segment of a (1-&gt;4)-alpha-D-glucan chain to a primary hydroxy group in a similar glucan chain.. It participates in glycan biosynthesis; glycogen biosynthesis. In terms of biological role, catalyzes the formation of the alpha-1,6-glucosidic linkages in glycogen by scission of a 1,4-alpha-linked oligosaccharide from growing alpha-1,4-glucan chains and the subsequent attachment of the oligosaccharide to the alpha-1,6 position. The protein is 1,4-alpha-glucan branching enzyme GlgB of Burkholderia cenocepacia (strain HI2424).